The following is a 96-amino-acid chain: uncharacterized protein (96 aa).

The chain crosses the membrane as a helical span at residues 53–71 (VLLMPLLQSFVLSLALMGV).

It localises to the membrane. This is an uncharacterized protein from Saccharomyces cerevisiae (strain ATCC 204508 / S288c) (Baker's yeast).